We begin with the raw amino-acid sequence, 396 residues long: DnaJ homolog subfamily A member 1 (396 aa).

The J domain maps to 6-68; it reads TYYDVLGVKP…KKRELYDKGG (63 aa). Lys66 bears the N6-acetyllysine mark. At Ser83 the chain carries Phosphoserine. The CR-type zinc finger occupies 120-204; sequence GATRKLALQK…CNGRKIVREK (85 aa). Residues Cys133, Cys136, Cys149, Cys152, Cys176, Cys179, Cys192, and Cys195 each contribute to the Zn(2+) site. CXXCXGXG motif repeat units follow at residues 133 to 140, 149 to 156, 176 to 183, and 192 to 199; these read CDKCEGRG, CPNCRGTG, CMECQGHG, and CKSCNGRK. Phosphoserine is present on Ser334. The tract at residues 351-396 is disordered; sequence VEETDEMDQVELVDFDPNQERRRHYNGEAYEDDEHHPRGGVQCQTS. Residues 352 to 364 are compositionally biased toward acidic residues; the sequence is EETDEMDQVELVD. Residue Tyr380 is modified to Phosphotyrosine. A Cysteine methyl ester modification is found at Cys393. Cys393 is lipidated: S-farnesyl cysteine. A propeptide spans 394-396 (removed in mature form); that stretch reads QTS.

Identified in a complex with HSPA1B and BAX. Interacts with RNF207.

It is found in the membrane. The protein localises to the cytoplasm. The protein resides in the microsome. Its subcellular location is the mitochondrion. It localises to the nucleus. It is found in the perinuclear region. In terms of biological role, co-chaperone for HSPA8/Hsc70. Plays a role in protein transport into mitochondria via its role as co-chaperone. Functions as co-chaperone for HSPA1B and negatively regulates the translocation of BAX from the cytosol to mitochondria in response to cellular stress, thereby protecting cells against apoptosis. Stimulates ATP hydrolysis, but not the folding of unfolded proteins mediated by HSPA1A (in vitro). Promotes apoptosis in response to cellular stress mediated by exposure to anisomycin or UV. The chain is DnaJ homolog subfamily A member 1 (DNAJA1) from Pongo abelii (Sumatran orangutan).